A 163-amino-acid chain; its full sequence is Putative 4-hydroxy-4-methyl-2-oxoglutarate aldolase (163 aa).

Residues 76–79 (GDML) and arginine 98 contribute to the substrate site. Aspartate 99 lines the a divalent metal cation pocket.

This sequence belongs to the class II aldolase/RraA-like family. Homotrimer. It depends on a divalent metal cation as a cofactor.

The enzyme catalyses 4-hydroxy-4-methyl-2-oxoglutarate = 2 pyruvate. It catalyses the reaction oxaloacetate + H(+) = pyruvate + CO2. In terms of biological role, catalyzes the aldol cleavage of 4-hydroxy-4-methyl-2-oxoglutarate (HMG) into 2 molecules of pyruvate. Also contains a secondary oxaloacetate (OAA) decarboxylase activity due to the common pyruvate enolate transition state formed following C-C bond cleavage in the retro-aldol and decarboxylation reactions. The chain is Putative 4-hydroxy-4-methyl-2-oxoglutarate aldolase from Pseudomonas putida (strain GB-1).